Consider the following 263-residue polypeptide: Proteasome subunit alpha type-1 (263 aa).

Met-1 is subject to N-acetylmethionine. Ser-110 carries the post-translational modification Phosphoserine; alternate. A glycan (O-linked (GlcNAc) serine; alternate) is linked at Ser-110. Lys-115 participates in a covalent cross-link: Glycyl lysine isopeptide (Lys-Gly) (interchain with G-Cter in ubiquitin). The residue at position 177 (Ser-177) is a Phosphoserine. A Glycyl lysine isopeptide (Lys-Gly) (interchain with G-Cter in ubiquitin) cross-link involves residue Lys-208. Residues 232 to 263 are disordered; the sequence is FLDGLEERPQRKAQPSQAAEEPAEKADEPMEH. A compositionally biased stretch (basic and acidic residues) spans 253 to 263; the sequence is PAEKADEPMEH.

It belongs to the peptidase T1A family. The 26S proteasome consists of a 20S proteasome core and two 19S regulatory subunits. The 20S proteasome core is a barrel-shaped complex made of 28 subunits that are arranged in four stacked rings. The two outer rings are each formed by seven alpha subunits, and the two inner rings are formed by seven beta subunits. The proteolytic activity is exerted by three beta-subunits PSMB5, PSMB6 and PSMB7. Interacts with NOTCH3. Interacts with ZFAND1. C-terminal extension is partially cleaved off by limited proteolysis leading to a conversion of the proteasome from its latent into its active form. In terms of tissue distribution, detected in liver (at protein level).

Its subcellular location is the cytoplasm. The protein resides in the nucleus. Component of the 20S core proteasome complex involved in the proteolytic degradation of most intracellular proteins. This complex plays numerous essential roles within the cell by associating with different regulatory particles. Associated with two 19S regulatory particles, forms the 26S proteasome and thus participates in the ATP-dependent degradation of ubiquitinated proteins. The 26S proteasome plays a key role in the maintenance of protein homeostasis by removing misfolded or damaged proteins that could impair cellular functions, and by removing proteins whose functions are no longer required. Associated with the PA200 or PA28, the 20S proteasome mediates ubiquitin-independent protein degradation. This type of proteolysis is required in several pathways including spermatogenesis (20S-PA200 complex) or generation of a subset of MHC class I-presented antigenic peptides (20S-PA28 complex). This Mus musculus (Mouse) protein is Proteasome subunit alpha type-1 (Psma1).